The primary structure comprises 509 residues: Seipin-3 (509 aa).

The segment at 33 to 73 (YDCLNSSPPANLRRRRLPMDTDSSSSSSTSSLESCEKRSTV) is disordered. Residues 52–63 (DTDSSSSSSTSS) show a composition bias toward low complexity. The next 2 membrane-spanning stretches (helical) occupy residues 238–258 (LFCAVYVGIMLFALLVSAFMI) and 455–475 (LFVWISMSLFIMELLFALVFF).

It belongs to the seipin family. As to expression, expressed in seeds, seedlings, leaves, stems and roots. Not detected in flowers.

It localises to the endoplasmic reticulum membrane. In terms of biological role, involved in lipid metabolism and lipid droplet (LD) morphology, number, and size. Supports the formation of small-sized LDs and modulates triacylglycerol accumulation. Induces probably a reorganization of the endoplasmic reticulum into LD-forming domains. This chain is Seipin-3, found in Arabidopsis thaliana (Mouse-ear cress).